Consider the following 341-residue polypeptide: Uroporphyrinogen decarboxylase (341 aa).

Substrate is bound by residues 25 to 29 (RQAGR), Phe-44, Asp-74, Tyr-151, Ser-206, and His-318.

It belongs to the uroporphyrinogen decarboxylase family. In terms of assembly, homodimer.

It is found in the cytoplasm. It catalyses the reaction uroporphyrinogen III + 4 H(+) = coproporphyrinogen III + 4 CO2. Its pathway is porphyrin-containing compound metabolism; protoporphyrin-IX biosynthesis; coproporphyrinogen-III from 5-aminolevulinate: step 4/4. Functionally, catalyzes the decarboxylation of four acetate groups of uroporphyrinogen-III to yield coproporphyrinogen-III. The chain is Uroporphyrinogen decarboxylase from Flavobacterium johnsoniae (strain ATCC 17061 / DSM 2064 / JCM 8514 / BCRC 14874 / CCUG 350202 / NBRC 14942 / NCIMB 11054 / UW101) (Cytophaga johnsonae).